Here is an 87-residue protein sequence, read N- to C-terminus: Cell division protein FtsL (87 aa).

Topologically, residues 1 to 6 (MNKSNF) are cytoplasmic. Residues 7 to 23 (FLLLAVCVSAFSVVMQQ) traverse the membrane as a helical segment. Residues 24–87 (NQYRLNFTAL…GNTFMVEHQR (64 aa)) lie on the Periplasmic side of the membrane. A coiled-coil region spans residues 31-71 (TALDKAKKQEIALEQDYAQMRLQQARLANHEAIRAAAEKQN). The interval 68–87 (EKQNLHPPVSGNTFMVEHQR) is disordered.

The protein belongs to the FtsL family. In terms of assembly, part of a complex composed of FtsB, FtsL and FtsQ.

It is found in the cell inner membrane. Essential cell division protein. May link together the upstream cell division proteins, which are predominantly cytoplasmic, with the downstream cell division proteins, which are predominantly periplasmic. The polypeptide is Cell division protein FtsL (Neisseria gonorrhoeae (strain ATCC 700825 / FA 1090)).